The sequence spans 556 residues: Trigger factor (556 aa).

The 87-residue stretch at 169–255 (GDVVVIDFAA…LREIKAKELP (87 aa)) folds into the PPIase FKBP-type domain. Over residues 438-452 (VDSEGNPTQAPTSLA) the composition is skewed to polar residues. Residues 438-556 (VDSEGNPTQA…KPSKKDKKGK (119 aa)) form a disordered region. The segment covering 461 to 472 (PEAEFEADEPEA) has biased composition (acidic residues). 2 stretches are compositionally biased toward low complexity: residues 486–503 (ETATGAETDGEAAAAEAE) and 511–526 (EASPAETVSASAAEAT).

This sequence belongs to the FKBP-type PPIase family. Tig subfamily.

Its subcellular location is the cytoplasm. The catalysed reaction is [protein]-peptidylproline (omega=180) = [protein]-peptidylproline (omega=0). Involved in protein export. Acts as a chaperone by maintaining the newly synthesized protein in an open conformation. Functions as a peptidyl-prolyl cis-trans isomerase. This is Trigger factor from Synechococcus sp. (strain JA-2-3B'a(2-13)) (Cyanobacteria bacterium Yellowstone B-Prime).